Reading from the N-terminus, the 569-residue chain is MAAATLSLLNNGELASSVKSPGTGRYAAVYSEVQNSRLDHPLPLPSVLGSPFKVVDGPPSSAAGHPEEIAKLFPSLYGQPCVSLVPDDSGDVAMNQILKIGVVLSGGQAPGGHNVISGIFDYLQTHCKGSTMYGFRGGPAGVMKGKYVVLTPEFIYPYRNQGGFDMICSGRDKIETPEQFKQAEETAKKLDLDGLVVIGGDDSNTNACLLAENFRSKNLKTRVIGCPKTIDGDLKSKEVPTSFGFDTACKIYAEMIGNVMIDARSTGKYYHFVRLMGRAASHITLECALQTHPNVTLIGEEVFAKKLTLKNVTDYIADVVCKRAESGYNYGVILIPEGLIDFIPEVQQLIAELNEILAHDVVDEAGVWKKKLTPQCLELFELLPLAIQEQLLLERDPHGNVQVAKIETEKMLIQMVETELDQRKQKGAYNAQFKGQSHFFGYEGRCGLPSNFDSTYCYALGYGAGSLLQSGKTGLISSVGNLAAPVEEWTVGGTALTALMDVERRHGKFKPVIKKAMVELEGAPFKKFASKREEWALNNRYINPGPIQFVGPVANKVNHTLLLELGVDA.

G107 contacts diphosphate. Mg(2+) is bound at residue D201. Substrate contacts are provided by residues 229–231 (TID), 268–269 (KY), 276–278 (MGR), E337, and 442–445 (YEGR). The active-site Proton acceptor is the D231.

Belongs to the phosphofructokinase type A (PFKA) family. PPi-dependent PFK group II subfamily. Clade 'Long' sub-subfamily. In terms of assembly, tetramer of two alpha (regulatory) and two beta (catalytic) chains. Mg(2+) is required as a cofactor.

The protein resides in the cytoplasm. It catalyses the reaction beta-D-fructose 6-phosphate + diphosphate = beta-D-fructose 1,6-bisphosphate + phosphate + H(+). The protein operates within carbohydrate degradation; glycolysis; D-glyceraldehyde 3-phosphate and glycerone phosphate from D-glucose: step 3/4. Its activity is regulated as follows. Allosterically activated by fructose 2,6-bisphosphate. Functionally, catalytic subunit of pyrophosphate--fructose 6-phosphate 1-phosphotransferase. Catalyzes the phosphorylation of D-fructose 6-phosphate, the first committing step of glycolysis. Uses inorganic phosphate (PPi) as phosphoryl donor instead of ATP like common ATP-dependent phosphofructokinases (ATP-PFKs), which renders the reaction reversible, and can thus function both in glycolysis and gluconeogenesis. This chain is Pyrophosphate--fructose 6-phosphate 1-phosphotransferase subunit beta, found in Solanum tuberosum (Potato).